The following is a 124-amino-acid chain: Glutaredoxin-2 (124 aa).

Cysteines 13 and 16 form a disulfide.

Belongs to the glutaredoxin family. Homodimer.

It is found in the host cytoplasm. In terms of biological role, glutaredoxin necessary for virion morphogenesis and virus replication. Functions as a thiol-disulfide transfer protein between membrane-associated OPG128 and substrates OPG095 or OPG053. The complete pathway for formation of disulfide bonds in intracellular virion membrane proteins sequentially involves oxidation of OPG072, OPG128 and OPG088. Exhibit thioltransferase and dehydroascorbate reductase activities in vitro. This Camelus protein is Glutaredoxin-2 (OPG088).